The sequence spans 320 residues: Malate dehydrogenase (320 aa).

NAD(+)-binding positions include 10–15 (GAGQIG) and Asp-34. Residues Arg-83 and Arg-89 each contribute to the substrate site. Residues Asn-96 and 119-121 (ITN) contribute to the NAD(+) site. The substrate site is built by Asn-121 and Arg-152. The active-site Proton acceptor is the His-176.

The protein belongs to the LDH/MDH superfamily. MDH type 3 family.

It carries out the reaction (S)-malate + NAD(+) = oxaloacetate + NADH + H(+). Catalyzes the reversible oxidation of malate to oxaloacetate. This Roseobacter denitrificans (strain ATCC 33942 / OCh 114) (Erythrobacter sp. (strain OCh 114)) protein is Malate dehydrogenase.